The sequence spans 212 residues: Putative inactive 6-phospho-alpha-glucosidase (212 aa).

NAD(+) is bound at residue 4–70 (FSVVVAGGGS…PDIAFSYTTD (67 aa)). 2 residues coordinate Mn(2+): Cys169 and His200.

It belongs to the glycosyl hydrolase 4 family.

In Escherichia coli (strain K12), this protein is Putative inactive 6-phospho-alpha-glucosidase.